The sequence spans 378 residues: RNA polymerase sigma factor SigA (378 aa).

A disordered region spans residues M1–N29. A sigma-70 factor domain-2 region spans residues L145–T215. Positions D169–Q172 match the Interaction with polymerase core subunit RpoC motif. Residues E224–A300 are sigma-70 factor domain-3. Residues I313–H366 form a sigma-70 factor domain-4 region. Residues L339–A358 constitute a DNA-binding region (H-T-H motif).

This sequence belongs to the sigma-70 factor family. RpoD/SigA subfamily. Interacts transiently with the RNA polymerase catalytic core.

The protein resides in the cytoplasm. Functionally, sigma factors are initiation factors that promote the attachment of RNA polymerase to specific initiation sites and are then released. This sigma factor is the primary sigma factor during exponential growth. In Clostridium acetobutylicum (strain ATCC 824 / DSM 792 / JCM 1419 / IAM 19013 / LMG 5710 / NBRC 13948 / NRRL B-527 / VKM B-1787 / 2291 / W), this protein is RNA polymerase sigma factor SigA.